Consider the following 140-residue polypeptide: Nucleoside diphosphate kinase (140 aa).

Lys11, Phe59, Arg87, Thr93, Arg104, and Asn114 together coordinate ATP. His117 acts as the Pros-phosphohistidine intermediate in catalysis.

Belongs to the NDK family. In terms of assembly, homotetramer. The cofactor is Mg(2+).

The protein localises to the cytoplasm. The catalysed reaction is a 2'-deoxyribonucleoside 5'-diphosphate + ATP = a 2'-deoxyribonucleoside 5'-triphosphate + ADP. It catalyses the reaction a ribonucleoside 5'-diphosphate + ATP = a ribonucleoside 5'-triphosphate + ADP. Functionally, major role in the synthesis of nucleoside triphosphates other than ATP. The ATP gamma phosphate is transferred to the NDP beta phosphate via a ping-pong mechanism, using a phosphorylated active-site intermediate. In Rhodopseudomonas palustris (strain BisB18), this protein is Nucleoside diphosphate kinase.